The sequence spans 276 residues: Membrane protein insertase YidC 2 (276 aa).

The N-terminal stretch at 1–22 (MGVKKKLKLTSLLGLSLLIMTA) is a signal peptide. Cys23 carries N-palmitoyl cysteine lipidation. Cys23 carries S-diacylglycerol cysteine lipidation. A run of 4 helical transmembrane segments spans residues 58–78 (ISIGVGIILFTVLIRTVLLPV), 130–150 (SDSLWPILIQMPVILALFQAL), 169–189 (VDTTLVLPILAAVFTFLSTWL), and 207–227 (GIPVLIFIFAVYAPGGVALYW).

The protein belongs to the OXA1/ALB3/YidC family. Type 2 subfamily. In terms of assembly, interacts with KhpB (also called EloR/Jag).

It localises to the cell membrane. Its function is as follows. Required for the insertion and/or proper folding and/or complex formation of integral membrane proteins into the membrane. Involved in integration of membrane proteins that insert both dependently and independently of the Sec translocase complex, as well as at least some lipoproteins. This chain is Membrane protein insertase YidC 2, found in Streptococcus pneumoniae (strain ATCC BAA-255 / R6).